The sequence spans 876 residues: MAP7 domain-containing protein 3 (876 aa).

Disordered regions lie at residues 30 to 139, 162 to 200, and 402 to 438; these read AEER…KFKA, GGVMNADKSGKLENKRSSSLSRKDNRLHPRGDMQHVDNT, and TEAPLQARGESRLEASVEGQPEANVEGSPKNPEIDKR. Polar residues predominate over residues 39 to 54; sequence INSSAGANKRSSSTPD. Residues 58 to 136 are a coiled coil; the sequence is LKNDVKQQLA…KQKQAEDTEK (79 aa). 2 stretches are compositionally biased toward basic and acidic residues: residues 60–139 and 169–196; these read NDVK…KFKA and KSGKLENKRSSSLSRKDNRLHPRGDMQH. Residues Ser417 and Ser483 each carry the phosphoserine modification. Coiled-coil stretches lie at residues 549 to 578 and 626 to 658; these read IQIRHAAYEQSKNEKERLQKEETKQRIARK and SAMMKSRDSAEQRKKEQENILQHWQERLERRKA. Disordered stretches follow at residues 558-683 and 742-783; these read QSKN…EIFP and IQGK…NPNH. 2 stretches are compositionally biased toward basic and acidic residues: residues 559 to 590 and 630 to 659; these read SKNEKERLQKEETKQRIARKPEIMAEKLDKVP and KSRDSAEQRKKEQENILQHWQERLERRKAS. Acidic residues predominate over residues 665-679; sequence SEDEADDEGESEDSL. Residues 750-763 show a composition bias toward basic residues; that stretch reads SAKKPPTRPIRSRK. Residues 771-782 show a composition bias toward polar residues; that stretch reads IRPTQSASSNPN.

This sequence belongs to the MAP7 family. In terms of tissue distribution, high expression in lung, skeletal muscle, brain, and kidney, with much weaker expression in spleen, small intestine, liver, and heart.

The protein localises to the cytoplasm. Its subcellular location is the cytoskeleton. It is found in the spindle. In terms of biological role, promotes the assembly and stability of microtubules. The sequence is that of MAP7 domain-containing protein 3 (Map7d3) from Mus musculus (Mouse).